The sequence spans 257 residues: tRNA pseudouridine synthase A (257 aa).

Aspartate 53 functions as the Nucleophile in the catalytic mechanism. Tyrosine 111 serves as a coordination point for substrate.

The protein belongs to the tRNA pseudouridine synthase TruA family. Homodimer.

It carries out the reaction uridine(38/39/40) in tRNA = pseudouridine(38/39/40) in tRNA. Functionally, formation of pseudouridine at positions 38, 39 and 40 in the anticodon stem and loop of transfer RNAs. This chain is tRNA pseudouridine synthase A, found in Xanthomonas oryzae pv. oryzae (strain MAFF 311018).